A 202-amino-acid chain; its full sequence is ATP-dependent Clp protease proteolytic subunit (202 aa).

S106 (nucleophile) is an active-site residue. Residue H131 is part of the active site.

It belongs to the peptidase S14 family. In terms of assembly, fourteen ClpP subunits assemble into 2 heptameric rings which stack back to back to give a disk-like structure with a central cavity, resembling the structure of eukaryotic proteasomes.

It localises to the cytoplasm. The enzyme catalyses Hydrolysis of proteins to small peptides in the presence of ATP and magnesium. alpha-casein is the usual test substrate. In the absence of ATP, only oligopeptides shorter than five residues are hydrolyzed (such as succinyl-Leu-Tyr-|-NHMec, and Leu-Tyr-Leu-|-Tyr-Trp, in which cleavage of the -Tyr-|-Leu- and -Tyr-|-Trp bonds also occurs).. Functionally, cleaves peptides in various proteins in a process that requires ATP hydrolysis. Has a chymotrypsin-like activity. Plays a major role in the degradation of misfolded proteins. The sequence is that of ATP-dependent Clp protease proteolytic subunit from Acidovorax sp. (strain JS42).